Reading from the N-terminus, the 200-residue chain is Probable nicotinate-nucleotide adenylyltransferase (200 aa).

The protein belongs to the NadD family.

The enzyme catalyses nicotinate beta-D-ribonucleotide + ATP + H(+) = deamido-NAD(+) + diphosphate. The protein operates within cofactor biosynthesis; NAD(+) biosynthesis; deamido-NAD(+) from nicotinate D-ribonucleotide: step 1/1. In terms of biological role, catalyzes the reversible adenylation of nicotinate mononucleotide (NaMN) to nicotinic acid adenine dinucleotide (NaAD). The protein is Probable nicotinate-nucleotide adenylyltransferase of Clostridium novyi (strain NT).